Here is a 1205-residue protein sequence, read N- to C-terminus: U2 snRNP component prp10 (1205 aa).

Disordered stretches follow at residues 39-58 (QKEA…EGTQ), 122-175 (YADE…GRSY), and 202-254 (GTLK…RRSR). Polar residues predominate over residues 44 to 58 (KNSSTNGSVNIEGTQ). The span at 130-153 (MQERQSKKQIQDRESDYQKQRYDR) shows a compositional bias: basic and acidic residues. HEAT repeat units follow at residues 393–429 (LRER…DFGA), 431–473 (ALFN…PFTH), 475–505 (ILVV…AKAS), 506–540 (GLAH…ASAL), 541–578 (GVPA…LLGC), 582–619 (PHLK…AATP), 665–702 (HFTR…TDGV), 745–782 (VGSR…SLGV), 828–865 (PYLP…VLKA), 912–949 (PPIR…RGSE), 954–991 (REWM…AIGP), 993–1024 (DVLA…AETC), 1025–1061 (MPFT…YIGE), 1065–1102 (DYVY…GCVG), 1107–1142 (DAMI…RNCI), and 1143–1179 (GVGP…QSAD).

The protein belongs to the SF3B1 family. Belongs to the 40S cdc5-associated complex (or cwf complex), a spliceosome sub-complex reminiscent of a late-stage spliceosome composed of the U2, U5 and U6 snRNAs and at least brr2, cdc5, cwf2/prp3, cwf3/syf1, cwf4/syf3, cwf5/ecm2, spp42/cwf6, cwf7/spf27, cwf8, cwf9, cwf10, cwf11, cwf12, prp45/cwf13, cwf14, cwf15, cwf16, cwf17, cwf18, cwf19, cwf20, cwf21, cwf22, cwf23, cwf24, cwf25, cwf26, cyp7/cwf27, cwf28, cwf29/ist3, lea1, msl1, prp5/cwf1, prp10, prp12/sap130, prp17, prp22, sap61, sap62, sap114, sap145, slu7, smb1, smd1, smd3, smf1, smg1 and syf2.

It is found in the nucleus. Functionally, contacts pre-mRNA on both sides of the branch site early in spliceosome assembly. The polypeptide is U2 snRNP component prp10 (prp10) (Schizosaccharomyces pombe (strain 972 / ATCC 24843) (Fission yeast)).